Consider the following 86-residue polypeptide: MSENNTSRKTRTGSVVSDRMEKSVVVRVERKVRHKLYGKFMKTSVKYLADDPENQCNIGDVVLIEECRPLSKRKRWRVKTILEQAV.

It belongs to the universal ribosomal protein uS17 family. Part of the 30S ribosomal subunit.

Functionally, one of the primary rRNA binding proteins, it binds specifically to the 5'-end of 16S ribosomal RNA. The chain is Small ribosomal subunit protein uS17 from Desulfotalea psychrophila (strain LSv54 / DSM 12343).